A 350-amino-acid polypeptide reads, in one-letter code: Pleckstrin (350 aa).

A PH 1 domain is found at 4 to 101 (KRIREGYLVK…WVRDIKKAIK (98 aa)). Residue Lys-64 is modified to N6-acetyllysine. Residues Ser-113 and Ser-117 each carry the phosphoserine; by PKC modification. A DEP domain is found at 136–221 (TEKGIKELNL…NPDAFYYFPD (86 aa)). A PH 2 domain is found at 244–347 (VIIKQGCLLK…WIRAIQMASR (104 aa)).

Its function is as follows. Major protein kinase C substrate of platelets. The chain is Pleckstrin (PLEK) from Homo sapiens (Human).